We begin with the raw amino-acid sequence, 509 residues long: Cruciferin CRU1 (509 aa).

An N-terminal signal peptide occupies residues 1-23; sequence MVKVPHLLVATFGVLLVLNGCLA. An intrachain disulfide couples C37 to C70. A Cupin type-1 1 domain is found at 42-271; the sequence is LDVLQPTETI…ALKIDVRLAQ (230 aa). S53 and S97 each carry phosphoserine. The cysteines at positions 113 and 326 are disulfide-linked. T116 is subject to Phosphothreonine. 3 disordered regions span residues 119-175, 230-249, and 301-321; these read DSQP…GFRD, RLAG…QQQN, and YESE…DNGL. Positions 124–172 are enriched in low complexity; sequence QGQQQGQPWQGQQGQQGQQGQQGQQGQQGQQGQQGQQGQQGQQGQQQQG. In terms of domain architecture, Cupin type-1 2 spans 332 to 481; sequence ENIDDPARAD…AFQISLEEAR (150 aa). S352 is subject to Phosphoserine. T445 and T487 each carry phosphothreonine.

It belongs to the 11S seed storage protein (globulins) family. As to quaternary structure, hexamer; each subunit is composed of an acidic and a basic chain derived from a single precursor and linked by a disulfide bond.

This is a seed storage protein. This is Cruciferin CRU1 (CRU1) from Brassica napus (Rape).